We begin with the raw amino-acid sequence, 462 residues long: Cysteine--tRNA ligase (462 aa).

Cys30 is a Zn(2+) binding site. Positions 32 to 42 (MTVYDYCHVGH) match the 'HIGH' region motif. Residues Cys214, His239, and Glu243 each coordinate Zn(2+). Positions 271–275 (KMSKS) match the 'KMSKS' region motif. Residue Lys274 coordinates ATP.

It belongs to the class-I aminoacyl-tRNA synthetase family. Monomer. Requires Zn(2+) as cofactor.

The protein resides in the cytoplasm. It catalyses the reaction tRNA(Cys) + L-cysteine + ATP = L-cysteinyl-tRNA(Cys) + AMP + diphosphate. This Cupriavidus pinatubonensis (strain JMP 134 / LMG 1197) (Cupriavidus necator (strain JMP 134)) protein is Cysteine--tRNA ligase.